The chain runs to 229 residues: Zinc finger matrin-type protein 4 (229 aa).

Matrin-type zinc fingers lie at residues 14-44 and 72-106; these read SYCKVCSAQLISESQRVAHYESRKHASKVRL and DKNKCCTLCNMSFTSAVVADSHYQGKIHAKRLKLL. A disordered region spans residues 116–135; it reads TATPLSPLKPPRMDTAPVVA. 2 Matrin-type zinc fingers span residues 145 to 175 and 198 to 228; these read RYCGLCAAWFNNPLMAQQHYDGKKHKKNAAR and YRCTICSVSLNSIEQYHAHLKGSKHQTNLKN.

It localises to the nucleus. The protein is Zinc finger matrin-type protein 4 (ZMAT4) of Homo sapiens (Human).